Reading from the N-terminus, the 145-residue chain is Histone H2B.10 (145 aa).

Over residues 1 to 15 (MAKADKKPAEKKPAE) the composition is skewed to basic and acidic residues. A disordered region spans residues 1–53 (MAKADKKPAEKKPAEKTPAAEPAAAAEKKPKAGKKLPKEPAGAGDKKKKRSKK). Position 3 is an N6-methyllysine (lysine 3). N6-acetyllysine occurs at positions 6 and 11. Lysine 12 is modified (N6,N6-dimethyllysine). An N6-acetyllysine mark is found at lysine 16, lysine 28, and lysine 34. Low complexity predominate over residues 16–25 (KTPAAEPAAA). Lysine 35 bears the N6-acetyllysine; partial mark. Lysine 141 participates in a covalent cross-link: Glycyl lysine isopeptide (Lys-Gly) (interchain with G-Cter in ubiquitin).

This sequence belongs to the histone H2B family. In terms of assembly, the nucleosome is a histone octamer containing two molecules each of H2A, H2B, H3 and H4 assembled in one H3-H4 heterotetramer and two H2A-H2B heterodimers. The octamer wraps approximately 147 bp of DNA. Interacts with ORTH2. Can be acetylated to form H2BK5ac, H2BK10ac, H2BK15ac, H2BK27ac, H2BK33ac and H2BK34ac. Post-translationally, dimethylated to form H2BK11me2. In terms of processing, monoubiquitinated by BRE1 to form H2BK143ub1 and deubiquitinated by UBP26. Required for heterochromatic histone H3 di- and trimethylation at H3K4me. May give a specific tag for epigenetic transcriptional activation.

The protein resides in the nucleus. The protein localises to the chromosome. Functionally, core component of nucleosome. Nucleosomes wrap and compact DNA into chromatin, limiting DNA accessibility to the cellular machineries which require DNA as a template. Histones thereby play a central role in transcription regulation, DNA repair, DNA replication and chromosomal stability. DNA accessibility is regulated via a complex set of post-translational modifications of histones, also called histone code, and nucleosome remodeling. The chain is Histone H2B.10 from Arabidopsis thaliana (Mouse-ear cress).